Here is a 255-residue protein sequence, read N- to C-terminus: Small ribosomal subunit protein uS2 (255 aa).

Residues 232–255 form a disordered region; sequence ASGRDIGASEEAPIEPALEDEAGA.

This sequence belongs to the universal ribosomal protein uS2 family.

The chain is Small ribosomal subunit protein uS2 from Agrobacterium fabrum (strain C58 / ATCC 33970) (Agrobacterium tumefaciens (strain C58)).